We begin with the raw amino-acid sequence, 505 residues long: Metalloprotease TIKI1 (505 aa).

The N-terminal stretch at 1–19 (MSPWSWFLLQTLCLLPTGA) is a signal peptide. Residues 20–477 (ASRRGAPGTA…RRGHSHHSQM (458 aa)) lie on the Extracellular side of the membrane. Asn220, Asn229, Asn278, and Asn336 each carry an N-linked (GlcNAc...) asparagine glycan. Residues 389–428 (PEAVSSGHSTLPPLVSRPGSADTPSEAEQRFRKKRRRSQR) are disordered. Positions 419 to 428 (FRKKRRRSQR) are enriched in basic residues. A helical membrane pass occupies residues 478–498 (VASSACLSLWTPVFWVLVLAF). Over 499–505 (QTETPLL) the chain is Cytoplasmic.

It belongs to the TIKI family. Mn(2+) is required as a cofactor. It depends on Co(2+) as a cofactor.

The protein localises to the cell membrane. Functionally, metalloprotease that acts as a negative regulator of the Wnt signaling pathway by mediating the cleavage of the 8 N-terminal residues of a subset of Wnt proteins. Following cleavage, Wnt proteins become oxidized and form large disulfide-bond oligomers, leading to their inactivation. Able to cleave WNT3A, WNT5, but not WNT11. Required for head formation. This chain is Metalloprotease TIKI1 (TRABD2A), found in Homo sapiens (Human).